The primary structure comprises 347 residues: Protein-glutamate methylesterase/protein-glutamine glutaminase (347 aa).

Residues 3–119 form the Response regulatory domain; that stretch reads EALVVDDSHF…STELSGHSEE (117 aa). D53 bears the 4-aspartylphosphate mark. Residues 132–154 form a disordered region; that stretch reads PTAGHDVEMEPASPPDATTSEYA. Residues 152-346 form the CheB-type methylesterase domain; it reads EYADNPTLLI…EAIADSIRRT (195 aa). Catalysis depends on residues S164, H191, and D288.

Belongs to the CheB family. Phosphorylated by CheA. Phosphorylation of the N-terminal regulatory domain activates the methylesterase activity.

The protein localises to the cytoplasm. It carries out the reaction [protein]-L-glutamate 5-O-methyl ester + H2O = L-glutamyl-[protein] + methanol + H(+). The enzyme catalyses L-glutaminyl-[protein] + H2O = L-glutamyl-[protein] + NH4(+). Involved in the modulation of the chemotaxis system; catalyzes the demethylation of specific methylglutamate residues introduced into the Htr transducer proteins (methyl-accepting chemotaxis proteins) by CheR. Also required for Htr deamidations, at least at a specific glutamine-glutamate pair in HTR-II and a specific aspartate-glutamine pair in Htr4. The chain is Protein-glutamate methylesterase/protein-glutamine glutaminase from Halobacterium salinarum (strain ATCC 29341 / DSM 671 / R1).